The primary structure comprises 865 residues: Protein translocase subunit SecA (865 aa).

Residues glutamine 93, glycine 111–threonine 115, and aspartate 501 each bind ATP. Zn(2+) contacts are provided by cysteine 841, cysteine 843, cysteine 852, and cysteine 853.

Belongs to the SecA family. In terms of assembly, monomer and homodimer. Part of the essential Sec protein translocation apparatus which comprises SecA, SecYEG and auxiliary proteins SecDF-YajC and YidC. Zn(2+) serves as cofactor.

The protein localises to the cell inner membrane. It localises to the cytoplasm. It catalyses the reaction ATP + H2O + cellular proteinSide 1 = ADP + phosphate + cellular proteinSide 2.. Part of the Sec protein translocase complex. Interacts with the SecYEG preprotein conducting channel. Has a central role in coupling the hydrolysis of ATP to the transfer of proteins into and across the cell membrane, serving as an ATP-driven molecular motor driving the stepwise translocation of polypeptide chains across the membrane. This is Protein translocase subunit SecA from Helicobacter pylori (strain P12).